Consider the following 255-residue polypeptide: Putative glutamine amidotransferase YafJ (255 aa).

Cysteine 2 acts as the For GATase activity in catalysis. The Glutamine amidotransferase type-2 domain maps to 2-251 (CELLGMSANV…PGEWRLFCLG (250 aa)).

The sequence is that of Putative glutamine amidotransferase YafJ (yafJ) from Escherichia coli (strain K12).